The primary structure comprises 82 residues: RNA-binding protein GWCH70_0105 (82 aa).

The protein belongs to the eukaryotic ribosomal protein eL8 family.

The chain is RNA-binding protein GWCH70_0105 from Geobacillus sp. (strain WCH70).